Reading from the N-terminus, the 255-residue chain is uncharacterized protein (255 aa).

N-linked (GlcNAc...) asparagine; by host glycosylation is found at N16 and N58. 2 helical membrane passes run 72–92 (LIYSNIKWLIVGITIIPTIYY) and 104–124 (LWYIGTPLVFMNLFNTLSHIC).

The protein resides in the membrane. This is an uncharacterized protein from Acanthamoeba polyphaga (Amoeba).